Consider the following 123-residue polypeptide: uncharacterized protein (123 aa).

The signal sequence occupies residues 1–20 (MARTLALRASAGLVAGMAMA).

This is an uncharacterized protein from Mycobacterium bovis (strain ATCC BAA-935 / AF2122/97).